We begin with the raw amino-acid sequence, 62 residues long: Photosystem II reaction center protein Z (62 aa).

2 helical membrane passes run 8 to 28 (AVFALIATSLILLISVPVVFA) and 41 to 61 (FSGTSLWIGLVFLVAILNSLI).

Belongs to the PsbZ family. PSII is composed of 1 copy each of membrane proteins PsbA, PsbB, PsbC, PsbD, PsbE, PsbF, PsbH, PsbI, PsbJ, PsbK, PsbL, PsbM, PsbT, PsbY, PsbZ, Psb30/Ycf12, at least 3 peripheral proteins of the oxygen-evolving complex and a large number of cofactors. It forms dimeric complexes.

It is found in the plastid. It localises to the chloroplast thylakoid membrane. Its function is as follows. May control the interaction of photosystem II (PSII) cores with the light-harvesting antenna, regulates electron flow through the 2 photosystem reaction centers. PSII is a light-driven water plastoquinone oxidoreductase, using light energy to abstract electrons from H(2)O, generating a proton gradient subsequently used for ATP formation. The sequence is that of Photosystem II reaction center protein Z from Phalaenopsis aphrodite subsp. formosana (Moth orchid).